The following is a 365-amino-acid chain: tRNA/tmRNA (uracil-C(5))-methyltransferase (365 aa).

Gln189, Tyr217, Asn222, Glu238, and Asp298 together coordinate S-adenosyl-L-methionine. The active-site Nucleophile is Cys323. The active-site Proton acceptor is the Glu357.

Belongs to the class I-like SAM-binding methyltransferase superfamily. RNA M5U methyltransferase family. TrmA subfamily.

It catalyses the reaction uridine(54) in tRNA + S-adenosyl-L-methionine = 5-methyluridine(54) in tRNA + S-adenosyl-L-homocysteine + H(+). The catalysed reaction is uridine(341) in tmRNA + S-adenosyl-L-methionine = 5-methyluridine(341) in tmRNA + S-adenosyl-L-homocysteine + H(+). Its function is as follows. Dual-specificity methyltransferase that catalyzes the formation of 5-methyluridine at position 54 (m5U54) in all tRNAs, and that of position 341 (m5U341) in tmRNA (transfer-mRNA). The polypeptide is tRNA/tmRNA (uracil-C(5))-methyltransferase (Shewanella denitrificans (strain OS217 / ATCC BAA-1090 / DSM 15013)).